The following is a 200-amino-acid chain: Probable nicotinate-nucleotide adenylyltransferase (200 aa).

Belongs to the NadD family.

The enzyme catalyses nicotinate beta-D-ribonucleotide + ATP + H(+) = deamido-NAD(+) + diphosphate. It functions in the pathway cofactor biosynthesis; NAD(+) biosynthesis; deamido-NAD(+) from nicotinate D-ribonucleotide: step 1/1. Its function is as follows. Catalyzes the reversible adenylation of nicotinate mononucleotide (NaMN) to nicotinic acid adenine dinucleotide (NaAD). In Clavibacter michiganensis subsp. michiganensis (strain NCPPB 382), this protein is Probable nicotinate-nucleotide adenylyltransferase.